Reading from the N-terminus, the 96-residue chain is Teretoxin Tan6.14 (96 aa).

Positions 1–21 (MRPLLVFVLMVSVSLAFSLEG) are cleaved as a signal peptide. The propeptide occupies 22 to 60 (MPNNGGDSVASITANQARRFKRNPLFSFAQHSLVDLKAR).

In terms of processing, contains 3 disulfide bonds. As to expression, expressed by the venom duct.

The protein localises to the secreted. The chain is Teretoxin Tan6.14 from Terebra anilis (Auger snail).